Here is a 133-residue protein sequence, read N- to C-terminus: MGDKWIGVALSDPLRILASPLVILRRDDDAKTVENIEALVKTHQPDLLVIGLPVSLNGTIGPQAEKVKAFSGLLSQSLNTEIIFRDERFSTDEARRKMNDSGKNNKTVRDDAAAAAVILQDYLDETNPPCFQP.

The protein belongs to the YqgF nuclease family.

The protein localises to the cytoplasm. In terms of biological role, could be a nuclease involved in processing of the 5'-end of pre-16S rRNA. The sequence is that of Putative pre-16S rRNA nuclease from Dehalococcoides mccartyi (strain ATCC BAA-2266 / KCTC 15142 / 195) (Dehalococcoides ethenogenes (strain 195)).